The primary structure comprises 70 residues: MTTKITGLVKWFNPEKGFGFITPKDGSKDVFVHFSAIQSNEFRTLNENQEVEFSAEQGPKGPSAVNVVAL.

The region spanning 7–67 is the CSD domain; it reads GLVKWFNPEK…GPKGPSAVNV (61 aa).

It localises to the cytoplasm. In Salmonella typhi, this protein is Cold shock-like protein CspJ (cspJ).